The primary structure comprises 286 residues: MSEDNRPLEEQLGNRAESPNTPESVREDNSKSQNNHLNQPSSTPQTPETTADNTFVESELLQDSQGIEKLLATLAEQIGSTQEGQEILGQLQPLLTNLIQQNESLLQTNQSLKDQLEEQNQQIDAAKRRYIGLAAEFDNFRKRTLREKEELEKQAKRKTLSELLTVVDNFERARLQIKPSNEGEGEIHKSYQGVYKNLVDSLKRLGVSAMRAEGEPFDPMYHEAMLREPTNDFPEGTVIEQLVRGYLLDDQVLRHAMVKVAAPKEPDSSETESTSESVSDVQQPTT.

Disordered stretches follow at residues 1–51 (MSED…ETTA) and 260–286 (VAAP…QPTT). Low complexity-rich tracts occupy residues 39 to 50 (QPSSTPQTPETT) and 271 to 286 (TEST…QPTT).

This sequence belongs to the GrpE family. As to quaternary structure, homodimer.

The protein resides in the cytoplasm. In terms of biological role, participates actively in the response to hyperosmotic and heat shock by preventing the aggregation of stress-denatured proteins, in association with DnaK and GrpE. It is the nucleotide exchange factor for DnaK and may function as a thermosensor. Unfolded proteins bind initially to DnaJ; upon interaction with the DnaJ-bound protein, DnaK hydrolyzes its bound ATP, resulting in the formation of a stable complex. GrpE releases ADP from DnaK; ATP binding to DnaK triggers the release of the substrate protein, thus completing the reaction cycle. Several rounds of ATP-dependent interactions between DnaJ, DnaK and GrpE are required for fully efficient folding. The polypeptide is Protein GrpE (Gloeothece citriformis (strain PCC 7424) (Cyanothece sp. (strain PCC 7424))).